The sequence spans 240 residues: Late expression factor 5 homolog (240 aa).

Belongs to the baculoviridae LEF-5 family.

Its function is as follows. Required for late and very late gene expression. In Tortricidae (ClGV), this protein is Late expression factor 5 homolog.